Here is a 61-residue protein sequence, read N- to C-terminus: Phosphoenolpyruvate synthase (61 aa).

The protein belongs to the PEP-utilizing enzyme family. The cofactor is Mg(2+).

It catalyses the reaction pyruvate + ATP + H2O = phosphoenolpyruvate + AMP + phosphate + 2 H(+). Its pathway is carbohydrate biosynthesis; gluconeogenesis. In terms of biological role, catalyzes the phosphorylation of pyruvate to phosphoenolpyruvate. In Enterobacter agglomerans (Erwinia herbicola), this protein is Phosphoenolpyruvate synthase (ppsA).